The following is a 94-amino-acid chain: Large ribosomal subunit protein eL42 (94 aa).

Residues cysteine 11, cysteine 14, cysteine 71, and cysteine 74 each contribute to the Zn(2+) site. The segment at 11–74 (CPYCKRHTIH…LDLRFVCTVC (64 aa)) adopts a C4-type zinc-finger fold.

The protein belongs to the eukaryotic ribosomal protein eL42 family. In terms of assembly, part of the 50S ribosomal subunit. Requires Zn(2+) as cofactor.

Binds to the 23S rRNA. The sequence is that of Large ribosomal subunit protein eL42 from Pyrococcus horikoshii (strain ATCC 700860 / DSM 12428 / JCM 9974 / NBRC 100139 / OT-3).